A 136-amino-acid chain; its full sequence is Protein PsiE homolog (136 aa).

4 helical membrane passes run 15 to 35 (AMQTVLNLGLLCLGIILIVFL), 58 to 78 (VEGLVVYFLYFEFIALIVKYF), 83 to 103 (HFPLRYFVYIGITAIVRLIII), and 108 to 128 (PMAVLIYSAAILILVITLWLC).

This sequence belongs to the PsiE family.

It localises to the cell inner membrane. The sequence is that of Protein PsiE homolog from Klebsiella pneumoniae (strain 342).